Reading from the N-terminus, the 93-residue chain is MNKDIFQGKIKEISGELRKKWGALTDDDIQKTKGNMEALSGLVQQKIGLSKEEASKQLSEFMTDIDKKFTSTGESASDKVNSKIDAIKNKLSH.

The protein belongs to the UPF0337 (CsbD) family.

The sequence is that of UPF0337 protein Bd3330 from Bdellovibrio bacteriovorus (strain ATCC 15356 / DSM 50701 / NCIMB 9529 / HD100).